The primary structure comprises 313 residues: Proclavaminate amidinohydrolase (313 aa).

Residues H121, D144, H146, D148, D235, and D237 each coordinate Mn(2+).

It belongs to the arginase family. As to quaternary structure, homohexamer. Mn(2+) is required as a cofactor.

The catalysed reaction is amidinoproclavaminate + H2O = proclavaminate + urea. Its pathway is antibiotic biosynthesis; clavulanate biosynthesis; clavulanate from D-glyceraldehyde 3-phosphate and L-arginine: step 4/8. The polypeptide is Proclavaminate amidinohydrolase (pah) (Streptomyces clavuligerus).